Here is a 217-residue protein sequence, read N- to C-terminus: Small ribosomal subunit protein uS3c (217 aa).

Residues 47-118 (IQKHVKSVSN…NLRVTLTGVI (72 aa)) form the KH type-2 domain.

The protein belongs to the universal ribosomal protein uS3 family. Part of the 30S ribosomal subunit.

It localises to the plastid. The protein localises to the chloroplast. The polypeptide is Small ribosomal subunit protein uS3c (rps3) (Adiantum capillus-veneris (Maidenhair fern)).